Consider the following 162-residue polypeptide: uncharacterized protein (162 aa).

This is an uncharacterized protein from Picosynechococcus sp. (strain ATCC 27264 / PCC 7002 / PR-6) (Agmenellum quadruplicatum).